We begin with the raw amino-acid sequence, 268 residues long: Small ribosomal subunit protein eS1 (268 aa).

Residues 1–21 form a disordered region; the sequence is MAVGKNKGLSKGGKKGGKKKV.

The protein belongs to the eukaryotic ribosomal protein eS1 family. Component of the small ribosomal subunit. Mature ribosomes consist of a small (40S) and a large (60S) subunit. The 40S subunit contains about 33 different proteins and 1 molecule of RNA (18S). The 60S subunit contains about 49 different proteins and 3 molecules of RNA (28S, 5.8S and 5S).

It localises to the cytoplasm. In terms of biological role, essential for oogenesis; required for late follicle cell development. This is Small ribosomal subunit protein eS1 from Drosophila erecta (Fruit fly).